Here is a 400-residue protein sequence, read N- to C-terminus: Phosphoglycerate kinase (400 aa).

Substrate is bound by residues 21–23 (DFN), Arg37, 60–63 (HFGR), Arg119, and Arg152. ATP-binding positions include Lys205, Gly296, Glu327, and 353-356 (GGDT).

It belongs to the phosphoglycerate kinase family. Monomer.

It localises to the cytoplasm. It catalyses the reaction (2R)-3-phosphoglycerate + ATP = (2R)-3-phospho-glyceroyl phosphate + ADP. The protein operates within carbohydrate degradation; glycolysis; pyruvate from D-glyceraldehyde 3-phosphate: step 2/5. This chain is Phosphoglycerate kinase, found in Aliarcobacter butzleri (strain RM4018) (Arcobacter butzleri).